Here is a 273-residue protein sequence, read N- to C-terminus: Glutamate racemase (273 aa).

Substrate contacts are provided by residues 7–8 and 39–40; these read DS and YG. Cys70 serves as the catalytic Proton donor/acceptor. 71 to 72 contacts substrate; it reads NT. Catalysis depends on Cys194, which acts as the Proton donor/acceptor. Position 195-196 (195-196) interacts with substrate; the sequence is TH.

It belongs to the aspartate/glutamate racemases family.

The catalysed reaction is L-glutamate = D-glutamate. It participates in cell wall biogenesis; peptidoglycan biosynthesis. Provides the (R)-glutamate required for cell wall biosynthesis. This Dinoroseobacter shibae (strain DSM 16493 / NCIMB 14021 / DFL 12) protein is Glutamate racemase.